Reading from the N-terminus, the 447-residue chain is 2-oxoadipate dioxygenase/decarboxylase (447 aa).

2-oxoadipate is bound by residues His-68, Arg-72, and His-224. His-68 contacts Fe(2+). 2 residues coordinate Fe(2+): His-224 and Glu-290. Val-391 contributes to the 2-oxoadipate binding site.

It belongs to the 2-oxoadipate dioxygenase/decarboxylase family. Requires Fe(2+) as cofactor.

It carries out the reaction 2-oxoadipate + O2 = (R)-2-hydroxyglutarate + CO2. Catalyzes the decarboxylation and hydroxylation of 2-oxoadipate (2OA) to form D-2-hydroxyglutarate (D-2-HGA). The sequence is that of 2-oxoadipate dioxygenase/decarboxylase (ydcJ) from Escherichia coli (strain K12).